The primary structure comprises 472 residues: Cell division protein FtsP (472 aa).

Positions 1–32 (MSLSRRRFIQASGLALCAGGLPLQARASGAQA) form a signal peptide, tat-type signal.

It belongs to the FtsP family. In terms of processing, predicted to be exported by the Tat system. The position of the signal peptide cleavage has not been experimentally proven.

Its subcellular location is the periplasm. In terms of biological role, cell division protein that is required for growth during stress conditions. May be involved in protecting or stabilizing the divisomal assembly under conditions of stress. The chain is Cell division protein FtsP from Edwardsiella tarda (strain FL6-60).